Here is a 180-residue protein sequence, read N- to C-terminus: DNA replication regulator protein HobA (180 aa).

Residues Glu17, Glu27, Glu140, Glu143, and Asn176 each coordinate Ca(2+).

Forms dimers and homotetramers. Interacts with domains I and II (residues 1-112) of DnaA. In a crystal with domains I and II of DnaA HobA forms tetramers with DnaA fragments bound at the dimer interface of the tetramer. It depends on Ca(2+) as a cofactor.

In terms of biological role, required for DNA replication initiation. Increases binding of DnaA to oriC region. This Helicobacter pylori (strain ATCC 700392 / 26695) (Campylobacter pylori) protein is DNA replication regulator protein HobA.